The following is a 494-amino-acid chain: Glutamate decarboxylase 5 (494 aa).

Lys276 bears the N6-(pyridoxal phosphate)lysine mark.

The protein belongs to the group II decarboxylase family. In terms of assembly, homohexamer. Interacts with calmodulin. Requires pyridoxal 5'-phosphate as cofactor. Expressed in flowers.

It catalyses the reaction L-glutamate + H(+) = 4-aminobutanoate + CO2. Catalyzes the production of GABA. The calmodulin-binding is calcium-dependent and it is proposed that this may, directly or indirectly, form a calcium regulated control of GABA biosynthesis. This is Glutamate decarboxylase 5 (GAD5) from Arabidopsis thaliana (Mouse-ear cress).